A 226-amino-acid chain; its full sequence is Agamous-like MADS-box protein AP3 (226 aa).

One can recognise an MADS-box domain in the interval 1 to 61 (MARGKIEIKR…GKLHEYISPS (61 aa)). A K-box domain is found at 84-174 (YERMQENLKK…LHEFDARDRD (91 aa)).

Expressed during flower development in stamens and petals.

The protein resides in the nucleus. In terms of biological role, probable transcription factor involved in flower development. This Vitis vinifera (Grape) protein is Agamous-like MADS-box protein AP3.